Here is a 154-residue protein sequence, read N- to C-terminus: Minor structural pilin EpdC (154 aa).

Positions 1–13 (MIKMLQLPFNKKG) are excised as a propeptide. A QXSXEXXXL motif is present at residues 14 to 24 (QVSFDFIIAML).

In terms of processing, the N-terminus is cleaved by the prepilin peptidase EppA, which recognizes the class III signal sequence.

It localises to the secreted. The protein localises to the cell surface. The protein resides in the fimbrium. Its function is as follows. Minor component of the type IV-like pili. Essential for pili formation. The sequence is that of Minor structural pilin EpdC from Methanococcus maripaludis (strain DSM 14266 / JCM 13030 / NBRC 101832 / S2 / LL).